A 445-amino-acid chain; its full sequence is Glutamate--tRNA ligase 1 (445 aa).

Residues 8–18 (PSPTGKLHVGN) carry the 'HIGH' region motif. Positions 239–243 (KLSKR) match the 'KMSKS' region motif. Residue K242 coordinates ATP.

Belongs to the class-I aminoacyl-tRNA synthetase family. Glutamate--tRNA ligase type 1 subfamily. Monomer.

Its subcellular location is the cytoplasm. It catalyses the reaction tRNA(Glu) + L-glutamate + ATP = L-glutamyl-tRNA(Glu) + AMP + diphosphate. In terms of biological role, catalyzes the attachment of glutamate to tRNA(Glu) in a two-step reaction: glutamate is first activated by ATP to form Glu-AMP and then transferred to the acceptor end of tRNA(Glu). In Maricaulis maris (strain MCS10) (Caulobacter maris), this protein is Glutamate--tRNA ligase 1.